We begin with the raw amino-acid sequence, 452 residues long: Probable glycine dehydrogenase (decarboxylating) subunit 1 (452 aa).

This sequence belongs to the GcvP family. N-terminal subunit subfamily. As to quaternary structure, the glycine cleavage system is composed of four proteins: P, T, L and H. In this organism, the P 'protein' is a heterodimer of two subunits.

It carries out the reaction N(6)-[(R)-lipoyl]-L-lysyl-[glycine-cleavage complex H protein] + glycine + H(+) = N(6)-[(R)-S(8)-aminomethyldihydrolipoyl]-L-lysyl-[glycine-cleavage complex H protein] + CO2. In terms of biological role, the glycine cleavage system catalyzes the degradation of glycine. The P protein binds the alpha-amino group of glycine through its pyridoxal phosphate cofactor; CO(2) is released and the remaining methylamine moiety is then transferred to the lipoamide cofactor of the H protein. The sequence is that of Probable glycine dehydrogenase (decarboxylating) subunit 1 from Novosphingobium aromaticivorans (strain ATCC 700278 / DSM 12444 / CCUG 56034 / CIP 105152 / NBRC 16084 / F199).